The following is a 466-amino-acid chain: 3-isopropylmalate dehydratase large subunit (466 aa).

[4Fe-4S] cluster is bound by residues Cys-346, Cys-406, and Cys-409.

Belongs to the aconitase/IPM isomerase family. LeuC type 1 subfamily. In terms of assembly, heterodimer of LeuC and LeuD. The cofactor is [4Fe-4S] cluster.

The enzyme catalyses (2R,3S)-3-isopropylmalate = (2S)-2-isopropylmalate. Its pathway is amino-acid biosynthesis; L-leucine biosynthesis; L-leucine from 3-methyl-2-oxobutanoate: step 2/4. Catalyzes the isomerization between 2-isopropylmalate and 3-isopropylmalate, via the formation of 2-isopropylmaleate. This is 3-isopropylmalate dehydratase large subunit from Alteromonas mediterranea (strain DSM 17117 / CIP 110805 / LMG 28347 / Deep ecotype).